Reading from the N-terminus, the 543-residue chain is Secreted effector protein SptP (543 aa).

Residues 35–139 (TDKAYVAPEK…FINIIKNKDN (105 aa)) form a chaperone-binding region. A Bacterial Rho-GAP domain is found at 162 to 293 (DVGAESKQPL…TAEFEKIKAG (132 aa)). Residues 315–543 (IPINQQTQVK…QAQLLMTTAS (229 aa)) form the Tyrosine-protein phosphatase domain. Cysteine 481 acts as the Phosphocysteine intermediate in catalysis.

Forms a complex with SicP.

It is found in the secreted. It localises to the host cytoplasm. It catalyses the reaction O-phospho-L-tyrosyl-[protein] + H2O = L-tyrosyl-[protein] + phosphate. In terms of biological role, effector proteins function to alter host cell physiology and promote bacterial survival in host tissues. This protein includes tyrosine phosphatase and GTPase activating protein (GAP) activities. After bacterial internalization, GAP mediates the reversal of the cytoskeletal changes induced by SopE. This function is independent of its tyrosine phosphatase activity, which remains unclear. This Salmonella paratyphi A (strain ATCC 9150 / SARB42) protein is Secreted effector protein SptP (sptP).